The chain runs to 410 residues: Cathepsin D (410 aa).

Residues 1–18 form the signal peptide; sequence MQPPSLLLLVLGLLAAPA. A propeptide spans 19 to 64 (activation peptide); the sequence is AALVRIPLHKFTSVRRTMTELGGPVEDLIAKGPISKYAQGAPAVTG. Positions 79-405 constitute a Peptidase A1 domain; it reads YYGEIGIGTP…DRDQNRVGLA (327 aa). 2 disulfide bridges follow: Cys91-Cys160 and Cys110-Cys117. Asp97 is a catalytic residue. N-linked (GlcNAc...) asparagine glycosylation is found at Asn134 and Asn261. A disulfide bridge links Cys284 with Cys288. Asp293 is an active-site residue. Cys327 and Cys364 form a disulfide bridge.

Belongs to the peptidase A1 family. Consists of a light chain and a heavy chain. Interacts with ADAM30; this leads to activation of CTSD. Interacts with GRN; stabilizes CTSD; increases its proteolytic activity. In terms of processing, N- and O-glycosylated. Post-translationally, undergoes proteolytic cleavage and activation by ADAM30.

Its subcellular location is the lysosome. The protein resides in the melanosome. It is found in the secreted. It localises to the extracellular space. The enzyme catalyses Specificity similar to, but narrower than, that of pepsin A. Does not cleave the 4-Gln-|-His-5 bond in B chain of insulin.. Functionally, acid protease active in intracellular protein breakdown. Plays a role in APP processing following cleavage and activation by ADAM30 which leads to APP degradation. The protein is Cathepsin D (CTSD) of Canis lupus familiaris (Dog).